A 182-amino-acid polypeptide reads, in one-letter code: Oligoribonuclease (182 aa).

Residues leucine 7 to leucine 170 enclose the Exonuclease domain. Residue tyrosine 128 is part of the active site.

The protein belongs to the oligoribonuclease family.

It localises to the cytoplasm. Its function is as follows. 3'-to-5' exoribonuclease specific for small oligoribonucleotides. In Hahella chejuensis (strain KCTC 2396), this protein is Oligoribonuclease.